Consider the following 285-residue polypeptide: Shikimate dehydrogenase (NADP(+)) (285 aa).

Residues Ser-19–Ser-21 and Thr-66 contribute to the shikimate site. The Proton acceptor role is filled by Lys-70. Shikimate is bound by residues Asn-91 and Asp-107. NADP(+) contacts are provided by residues Gly-129–Ala-133 and Leu-228. Tyr-230 contributes to the shikimate binding site. Gly-251 is an NADP(+) binding site.

The protein belongs to the shikimate dehydrogenase family. As to quaternary structure, homodimer.

The enzyme catalyses shikimate + NADP(+) = 3-dehydroshikimate + NADPH + H(+). It participates in metabolic intermediate biosynthesis; chorismate biosynthesis; chorismate from D-erythrose 4-phosphate and phosphoenolpyruvate: step 4/7. Functionally, involved in the biosynthesis of the chorismate, which leads to the biosynthesis of aromatic amino acids. Catalyzes the reversible NADPH linked reduction of 3-dehydroshikimate (DHSA) to yield shikimate (SA). The sequence is that of Shikimate dehydrogenase (NADP(+)) from Prochlorococcus marinus (strain MIT 9515).